A 160-amino-acid chain; its full sequence is Ureidoglycolate lyase (160 aa).

Belongs to the ureidoglycolate lyase family. As to quaternary structure, homodimer. Ni(2+) serves as cofactor.

It catalyses the reaction (S)-ureidoglycolate = urea + glyoxylate. Its pathway is nitrogen metabolism; (S)-allantoin degradation. Catalyzes the catabolism of the allantoin degradation intermediate (S)-ureidoglycolate, generating urea and glyoxylate. Involved in the utilization of allantoin as nitrogen source. The chain is Ureidoglycolate lyase from Salmonella agona (strain SL483).